A 508-amino-acid polypeptide reads, in one-letter code: Protein phosphatase PP2A regulatory subunit B (508 aa).

WD repeat units lie at residues Thr-19–Ser-58, Glu-81–Val-122, Ala-166–Asn-204, Glu-215–Ser-255, Glu-274–Lys-312, and Glu-329–Asp-370. A disordered region spans residues Asp-369–Gly-466. Over residues Asp-396–Val-418 the composition is skewed to acidic residues. Residues Phe-447–Met-461 show a composition bias toward basic residues. One copy of the WD 7 repeat lies at Asp-477 to Thr-507.

Belongs to the phosphatase 2A regulatory subunit B family. PP2A exists in several trimeric forms, all of which consist of a core composed of a catalytic subunit associated with a 65 kDa (PR65) (Subunit A) and a 55 kDa (PR55) (Subunit B) regulatory subunit.

Phosphatase 2A affects a variety of biological processes in the cell such as transcription, cell cycle progression and cellular morphogenesis, and provides an initial identification of critical substrates for this phosphatase. The regulatory subunit may direct the catalytic subunit to distinct, albeit overlapping, subsets of substrates. In Candida tropicalis (Yeast), this protein is Protein phosphatase PP2A regulatory subunit B (CDC55).